The primary structure comprises 171 residues: Ribosome maturation factor RimM (171 aa).

The 73-residue stretch at 98-170 (EGEFYLHQII…AVQVSVPEGL (73 aa)) folds into the PRC barrel domain.

It belongs to the RimM family. Binds ribosomal protein uS19.

It is found in the cytoplasm. Functionally, an accessory protein needed during the final step in the assembly of 30S ribosomal subunit, possibly for assembly of the head region. Essential for efficient processing of 16S rRNA. May be needed both before and after RbfA during the maturation of 16S rRNA. It has affinity for free ribosomal 30S subunits but not for 70S ribosomes. This chain is Ribosome maturation factor RimM, found in Pediococcus pentosaceus (strain ATCC 25745 / CCUG 21536 / LMG 10740 / 183-1w).